A 220-amino-acid polypeptide reads, in one-letter code: Metalloproteinase inhibitor 2 (220 aa).

A signal peptide spans 1–26; the sequence is MGAAARSLRLALGLLLLATLPRPADA. Cysteine 27 provides a ligand contact to Zn(2+). Involved in metalloproteinase-binding stretches follow at residues 27-30 and 95-96; these read CSCS and SA. 6 disulfide bridges follow: cysteine 27/cysteine 98, cysteine 29/cysteine 127, cysteine 39/cysteine 152, cysteine 154/cysteine 201, cysteine 159/cysteine 164, and cysteine 172/cysteine 193. The NTR domain occupies 27-152; it reads CSCSPVHPQQ…SLNHRYQMGC (126 aa).

It belongs to the protease inhibitor I35 (TIMP) family. In terms of assembly, interacts (via the C-terminal) with MMP2 (via the C-terminal PEX domain); the interaction inhibits the MMP2 activity. The activity of TIMP2 is dependent on the presence of disulfide bonds.

It localises to the secreted. Functionally, complexes with metalloproteinases (such as collagenases) and irreversibly inactivates them by binding to their catalytic zinc cofactor. The sequence is that of Metalloproteinase inhibitor 2 (TIMP2) from Canis lupus familiaris (Dog).